We begin with the raw amino-acid sequence, 384 residues long: MSDEEEYSEEEEEVPVDTKPRHSVIVVEEKGDPEFVKRQEQKSSALDEQLKEYIAEWRKQRAKEEEDLKKLKDKQSKRKVMRADEEKRMAERKKQEEERRVREIEEKKQRDIEEKRRRLEEAEKKRQAMMQALKEQKQQKGPNFTIQKKDPSFNMSSAQIERNKTKEQLEEEKKISLSFRIKPLEIENLNVDKLKVKATELWDAIVKLETEKYDLEERQKRQDYDLKELKERQKQQLRHKALKKGLDPEALTGKYPPKIQVASKYERRVDTRSYDDKKKLFEGGWATLSSESNEKVWKSKYELFANRSKSKLPKWFGERPGKKKGDPESPEEEEVKADAGVDDELEEPTFEPEPEPEPEEEAAEEEAEEEEEEEEEEEEEEEEE.

Residues 1–15 (MSDEEEYSEEEEEVP) show a composition bias toward acidic residues. Disordered regions lie at residues 1–23 (MSDE…PRHS), 61–169 (RAKE…KEQL), 237–257 (LRHK…KYPP), and 313–384 (PKWF…EEEE). 2 stretches are compositionally biased toward basic and acidic residues: residues 61-74 (RAKE…LKDK) and 81-126 (MRAD…EKKR). A compositionally biased stretch (basic and acidic residues) spans 316 to 327 (FGERPGKKKGDP). A compositionally biased stretch (acidic residues) spans 328-384 (ESPEEEEVKADAGVDDELEEPTFEPEPEPEPEEEAAEEEAEEEEEEEEEEEEEEEEE).

This sequence belongs to the troponin T family.

Its function is as follows. Troponin T is the tropomyosin-binding subunit of troponin, the thin filament regulatory complex which confers calcium-sensitivity to striated muscle actomyosin ATPase activity. This Periplaneta americana (American cockroach) protein is Troponin T (TNT).